The sequence spans 153 residues: Proline-rich membrane anchor 1 (153 aa).

The first 35 residues, 1-35 (MLLRDLVLRRGCCWSSLLLHCALHPLWGFVQVTHG), serve as a signal peptide directing secretion. Residues 36 to 92 (EPQKSCSKVTDSCRHVCQCRPPPPLPPPPPPPPPPRLLSAPAPNSTSCPTEESWWSG) lie on the Extracellular side of the membrane. The PRAD domain occupies 56–70 (PPPPLPPPPPPPPPP). Residues 59–71 (PLPPPPPPPPPPR) are compositionally biased toward pro residues. The disordered stretch occupies residues 59–79 (PLPPPPPPPPPPRLLSAPAPN). Asn-79 carries an N-linked (GlcNAc...) asparagine glycan. A helical membrane pass occupies residues 93–113 (LVIIIAVCCASLVFLTVLVII). Residues 114-153 (CYKAIKRKPLRKDENGTSVAEYPMSASQSNKGVDVNNAVV) are Cytoplasmic-facing.

As to quaternary structure, interacts with ACHE, probably through disulfide bonds.

The protein localises to the cell membrane. It localises to the cell junction. It is found in the synapse. Functionally, required to anchor acetylcholinesterase (ACHE) to the basal lamina of the neuromuscular junction and to the membrane of neuronal synapses in brain. Also able to organize ACHE into tetramers. The protein is Proline-rich membrane anchor 1 (PRIMA1) of Homo sapiens (Human).